The primary structure comprises 131 residues: Large ribosomal subunit protein bL21 (131 aa).

Belongs to the bacterial ribosomal protein bL21 family. Part of the 50S ribosomal subunit. Contacts protein L20.

This protein binds to 23S rRNA in the presence of protein L20. The sequence is that of Large ribosomal subunit protein bL21 from Cereibacter sphaeroides (strain ATCC 17023 / DSM 158 / JCM 6121 / CCUG 31486 / LMG 2827 / NBRC 12203 / NCIMB 8253 / ATH 2.4.1.) (Rhodobacter sphaeroides).